We begin with the raw amino-acid sequence, 290 residues long: Ciliary microtubule inner protein 6 (290 aa).

The disordered stretch occupies residues 76 to 112 (ENQGDWWPHGKGLENPFQPPYDTKSTQRSDFKKPTCP). 2 mn regions span residues 128 to 160 (GIVP…ARKT) and 213 to 246 (SAES…IRVA). Positions 197-228 (SGSCSSEQSKKTEKGNSAESKMISPGLCRQNS) are disordered.

The protein resides in the cell projection. It is found in the cilium. The polypeptide is Ciliary microtubule inner protein 6 (CIMIP6) (Bos taurus (Bovine)).